The primary structure comprises 241 residues: MRHTRFHPIKLAWITAVVAGLMVGVATPADAEPGQWDPTLPALVSAGAPGDPLAVANASLQATAQATQTTLDLGRQFLGGLGINLGGPAASAPSAATTGASRIPRANARQAVEYVIRRAGSQMGVPYSWGGGSLQGPSKGVDSGANTVGFDCSGLVRYAFAGVGVLIPRFSGDQYNAGRHVPPAEAKRGDLIFYGPGGGQHVTLYLGNGQMLEASGSAGKVTVSPVRKAGMTPFVTRIIEY.

The first 31 residues, 1–31, serve as a signal peptide directing secretion; it reads MRHTRFHPIKLAWITAVVAGLMVGVATPADA. A NlpC/P60 domain is found at 109–241; the sequence is RQAVEYVIRR…TPFVTRIIEY (133 aa). Cys152 (nucleophile) is an active-site residue. His201 serves as the catalytic Proton acceptor. Glu213 is a catalytic residue.

It belongs to the peptidase C40 family. As to quaternary structure, monomer.

Peptidoglycan endopeptidase that cleaves the bond between D-glutamate and meso-diaminopimelate. Binds high-molecular weight peptidoglycan, but does not degrade it. Required for normal separation of daughter cells after cell division and cell wall integrity. Required for host cell invasion. In Mycobacterium tuberculosis (strain CDC 1551 / Oshkosh), this protein is Peptidoglycan endopeptidase RipB (ripB).